The following is a 247-amino-acid chain: MSHPSTLVLIPARMAATRLPGKPLLDIAGLPMIVHVLRRAEAADVGPVAVATDTAEIAAAVEAHGGRVVMTRADHPSGSDRVAEALGVLDPDGRIEIVVNLQGDFPTIRPDNIGAVLGPLADPAVDIATLCAEIHTEEEATNPNVVKVIGSPLSPARLRALYFTRATAPWGEGPRYHHIGLYAYRRAALQRFIALPPSALEQREKLEQLRALEAGMRIDVGIVDTVPRGVDTAADLETARRILSSRN.

It belongs to the KdsB family.

The protein resides in the cytoplasm. The enzyme catalyses 3-deoxy-alpha-D-manno-oct-2-ulosonate + CTP = CMP-3-deoxy-beta-D-manno-octulosonate + diphosphate. It participates in nucleotide-sugar biosynthesis; CMP-3-deoxy-D-manno-octulosonate biosynthesis; CMP-3-deoxy-D-manno-octulosonate from 3-deoxy-D-manno-octulosonate and CTP: step 1/1. Its pathway is bacterial outer membrane biogenesis; lipopolysaccharide biosynthesis. In terms of biological role, activates KDO (a required 8-carbon sugar) for incorporation into bacterial lipopolysaccharide in Gram-negative bacteria. This Rhodopseudomonas palustris (strain BisA53) protein is 3-deoxy-manno-octulosonate cytidylyltransferase.